A 234-amino-acid polypeptide reads, in one-letter code: Small ribosomal subunit protein uS3 (234 aa).

In terms of domain architecture, KH type-2 spans 39 to 107; it reads IRKFLKKELY…EVSINIKEVK (69 aa).

It belongs to the universal ribosomal protein uS3 family. In terms of assembly, part of the 30S ribosomal subunit. Forms a tight complex with proteins S10 and S14.

Functionally, binds the lower part of the 30S subunit head. Binds mRNA in the 70S ribosome, positioning it for translation. This is Small ribosomal subunit protein uS3 from Helicobacter pylori (strain G27).